A 239-amino-acid chain; its full sequence is MTLYKLVVLGDGGVGKTALTIQLCLNHFVETYDPTIEDSYRKQVVIDQQSCMLEVLDTAGQEEYTALRDQWIRDGEGFVLVYSITSRASFTRIQKFYNQIKMVKESAHSGSPSGASYLGSPMNAPSGPPLPVPVMLVGNKSDKAVERAVSAQEGQALAKDLGCEFVEASAKNCINVEKAFYDVVRMLRQQRQQQQGGRAQDRRPTGLGPMRDRDAGPEYPKTFRPDRARHRGGIKCVIL.

GTP is bound by residues 13 to 18, 29 to 35, 59 to 60, 139 to 142, and 169 to 171; these read GVGKTA, VETYDPT, AG, NKSD, and SAK. An Effector region motif is present at residues 32–40; that stretch reads YDPTIEDSY. Residues 191 to 227 are disordered; it reads RQQQQGGRAQDRRPTGLGPMRDRDAGPEYPKTFRPDR. Over residues 199–226 the composition is skewed to basic and acidic residues; the sequence is AQDRRPTGLGPMRDRDAGPEYPKTFRPD.

The protein belongs to the small GTPase superfamily. Ras family. In terms of assembly, interacts with mpkA.

It carries out the reaction GTP + H2O = GDP + phosphate + H(+). Its function is as follows. Ras-like protein involved in the activation of Ras protein signal transduction. Ras proteins bind GDP/GTP and possess intrinsic GTPase activity. Plays a role in hyphal morphology and conidiophore development. Required for full virulence. The protein is Ras-like protein B of Aspergillus fumigatus (strain ATCC MYA-4609 / CBS 101355 / FGSC A1100 / Af293) (Neosartorya fumigata).